Here is a 729-residue protein sequence, read N- to C-terminus: Rho GTPase-activating protein 28 (729 aa).

The disordered stretch occupies residues 1 to 78 (MEVEDSGGVV…ASVDSSASME (78 aa)). Residues 37-49 (LSRKSIPRCRRIN) show a composition bias toward basic residues. Residues 63 to 76 (SRSNSQASVDSSAS) show a composition bias toward low complexity. Serine 70 bears the Phosphoserine mark. The residue at position 164 (threonine 164) is a Phosphothreonine. The disordered stretch occupies residues 180-234 (FGVSESPPSDSCEHATQLDGTKEEKDLPGVTKTSRPLPDDASLSSTTLSNGAQDE). The span at 221–231 (SLSSTTLSNGA) shows a compositional bias: polar residues. Residues 384–581 (VPLTVLLDND…LMLKYQKILW (198 aa)) form the Rho-GAP domain.

In terms of biological role, GTPase activator for the Rho-type GTPases by converting them to an inactive GDP-bound state. The sequence is that of Rho GTPase-activating protein 28 (Arhgap28) from Mus musculus (Mouse).